We begin with the raw amino-acid sequence, 353 residues long: Photosystem II D2 protein (353 aa).

Thr-2 bears the N-acetylthreonine mark. Thr-2 is modified (phosphothreonine). Residues 41-61 form a helical membrane-spanning segment; sequence CAYFAVGGWFTGTTFVTSWYT. His-118 serves as a coordination point for chlorophyll a. Residues 125–141 form a helical membrane-spanning segment; sequence GFMLRQFELARSVQLRP. Pheophytin a-binding residues include Gln-130 and Asn-143. Residues 153–166 traverse the membrane as a helical segment; that stretch reads VFVSVFLIYPLGQS. Position 198 (His-198) interacts with chlorophyll a. Residues 208–228 form a helical membrane-spanning segment; the sequence is AALLCAIHGATVENTLFEDGD. Residues His-215 and Phe-262 each coordinate a plastoquinone. His-215 is a binding site for Fe cation. His-269 contributes to the Fe cation binding site. The chain crosses the membrane as a helical span at residues 279–295; the sequence is GLWMSALGVVGLALNLR.

It belongs to the reaction center PufL/M/PsbA/D family. In terms of assembly, PSII is composed of 1 copy each of membrane proteins PsbA, PsbB, PsbC, PsbD, PsbE, PsbF, PsbH, PsbI, PsbJ, PsbK, PsbL, PsbM, PsbT, PsbX, PsbY, PsbZ, Psb30/Ycf12, at least 3 peripheral proteins of the oxygen-evolving complex and a large number of cofactors. It forms dimeric complexes. The D1/D2 heterodimer binds P680, chlorophylls that are the primary electron donor of PSII, and subsequent electron acceptors. It shares a non-heme iron and each subunit binds pheophytin, quinone, additional chlorophylls, carotenoids and lipids. There is also a Cl(-1) ion associated with D1 and D2, which is required for oxygen evolution. The PSII complex binds additional chlorophylls, carotenoids and specific lipids. serves as cofactor.

The protein localises to the plastid. It is found in the chloroplast thylakoid membrane. It carries out the reaction 2 a plastoquinone + 4 hnu + 2 H2O = 2 a plastoquinol + O2. Functionally, photosystem II (PSII) is a light-driven water:plastoquinone oxidoreductase that uses light energy to abstract electrons from H(2)O, generating O(2) and a proton gradient subsequently used for ATP formation. It consists of a core antenna complex that captures photons, and an electron transfer chain that converts photonic excitation into a charge separation. The D1/D2 (PsbA/PsbD) reaction center heterodimer binds P680, the primary electron donor of PSII as well as several subsequent electron acceptors. D2 is needed for assembly of a stable PSII complex. This Guizotia abyssinica (Niger) protein is Photosystem II D2 protein.